Here is a 126-residue protein sequence, read N- to C-terminus: Protein ApaG (126 aa).

The region spanning 2-126 is the ApaG domain; it reads DVSQPRIQIQ…FRLAVPNILN (125 aa).

In Vibrio vulnificus (strain CMCP6), this protein is Protein ApaG.